The following is a 486-amino-acid chain: NADH dehydrogenase [ubiquinone] flavoprotein 1, mitochondrial (486 aa).

A mitochondrion-targeting transit peptide spans 1-30 (MAPVRGILGLQRAVSIWKESNRLTPALRSF). A compositionally biased stretch (low complexity) spans 31 to 40 (STQAASTSTT). The segment at 31-57 (STQAASTSTTPQPPPPPPPPEKTHFGG) is disordered. Positions 41-50 (PQPPPPPPPP) are enriched in pro residues. NADH is bound at residue 110–119 (GRGGAGFPSG). An FMN-binding site is contributed by 222 to 270 (FGAGAYICGEETALLESLEGKQGKPRLKPPFPANAGLYGCPTTVTNVET). Positions 402, 405, 408, and 448 each coordinate [4Fe-4S] cluster.

This sequence belongs to the complex I 51 kDa subunit family. As to quaternary structure, complex I is composed of at least 49 different subunits. This is a component of the flavoprotein-sulfur (FP) fragment of the enzyme. FMN serves as cofactor. [4Fe-4S] cluster is required as a cofactor.

The protein localises to the mitochondrion inner membrane. The enzyme catalyses a ubiquinone + NADH + 5 H(+)(in) = a ubiquinol + NAD(+) + 4 H(+)(out). In terms of biological role, core subunit of the mitochondrial membrane respiratory chain NADH dehydrogenase (Complex I) that is believed to belong to the minimal assembly required for catalysis. Complex I functions in the transfer of electrons from NADH to the respiratory chain. The immediate electron acceptor for the enzyme is believed to be ubiquinone. The protein is NADH dehydrogenase [ubiquinone] flavoprotein 1, mitochondrial of Arabidopsis thaliana (Mouse-ear cress).